Here is a 188-residue protein sequence, read N- to C-terminus: Gamma-glutamylcyclotransferase (188 aa).

Substrate is bound at residue 19–22; sequence YFAY. Glu-98 acts as the Proton acceptor in catalysis. Ser-173 carries the post-translational modification Phosphoserine.

It belongs to the gamma-glutamylcyclotransferase family. Homodimer.

It catalyses the reaction an alpha-(gamma-L-glutamyl)-L-amino acid = 5-oxo-L-proline + an L-alpha-amino acid. Catalyzes the formation of 5-oxoproline from gamma-glutamyl dipeptides and may play a significant role in glutathione homeostasis. Induces release of cytochrome c from mitochondria with resultant induction of apoptosis. The sequence is that of Gamma-glutamylcyclotransferase (GGCT) from Bos taurus (Bovine).